We begin with the raw amino-acid sequence, 652 residues long: MSSNDSAQTRNLQEERFNERTSTPTVVTAVLPDTNGPTTNSTSGSVGPPHPTPNVPVPTQSSSDPPSASGIFAKEIDLPRNVIQHSGNKFILDVVPDSRFPTFAITEFVQRSFSNFTFEQYSYVSPASLVGYLVYMIHAFVFLVDAFERSPMSAYASEIDASHAYLRIIDAFSDAYIPDFLFEILDTYLSHRLDIRSKLEMNVSYGSVLYKYDAPRIVAPSIFLLAHNQLISQSRESTAYEKWLDSIVIHYSRAVIRVGNLVGGLYQSSHGSTTTHFTYRNWFARSLSRLADSATHRTHLRRPMISEFDYNIPSVNNNTYNPYVHLLMLEPNNRNITLDFIRSLSSFCSTELKATRTLRDHISRRSAAISRCVIKGPEAPTWHSSPLDDLKEKSKQGNFSQFCEVAKFGLPRKENSESYTFKFPKDASTIDTAFYLIQENGRSSVLDPTTADEELHTEGMNLLFDPYDDESSAHYATVLSGKLIQNSNIDGETLLLPDPTTGLARTNSRYLQGSVLIRNVLPEFDQHEIRLFPRYPQISRLSASLTLLFNMRQVWIPRFKQKVDEQPKLSNFSWNEGCDGTVPSLNVVTAESSTNGPAAEQQVILWSSYRHVSNSDRPTVDTVYYYSTLELLFGTRSSMMQTYNLHQLLSLH.

Polar residues predominate over residues 1–11; that stretch reads MSSNDSAQTRN. A disordered region spans residues 1-70; it reads MSSNDSAQTR…SSSDPPSASG (70 aa). The segment covering 34-47 has biased composition (low complexity); sequence TNGPTTNSTSGSVG.

The protein resides in the virion. The capsid protein self-assembles to form an icosahedral capsid with a T=2 symmetry made of 120 subunits. This is Capsid protein from Atkinsonella hypoxylon virus (isolate 2H) (AhV).